Reading from the N-terminus, the 284-residue chain is uncharacterized protein (284 aa).

A C3H1-type zinc finger spans residues 37–65; it reads NEKKLICFSIINGENCIYGPNCTYAHSLS.

This is an uncharacterized protein from Acanthamoeba polyphaga (Amoeba).